The chain runs to 168 residues: Xanthine-guanine phosphoribosyltransferase (168 aa).

5-phospho-alpha-D-ribose 1-diphosphate contacts are provided by residues 46 to 47 (RG) and 101 to 109 (DDLVDSGVT). A Mg(2+)-binding site is contributed by Asp102. Asp105 provides a ligand contact to guanine. Xanthine contacts are provided by Asp105 and Val148. Residues 105–109 (DSGVT) and 147–148 (WV) each bind GMP.

The protein belongs to the purine/pyrimidine phosphoribosyltransferase family. XGPT subfamily. In terms of assembly, homotetramer. Mg(2+) is required as a cofactor.

It localises to the cell inner membrane. The catalysed reaction is GMP + diphosphate = guanine + 5-phospho-alpha-D-ribose 1-diphosphate. It carries out the reaction XMP + diphosphate = xanthine + 5-phospho-alpha-D-ribose 1-diphosphate. The enzyme catalyses IMP + diphosphate = hypoxanthine + 5-phospho-alpha-D-ribose 1-diphosphate. Its pathway is purine metabolism; GMP biosynthesis via salvage pathway; GMP from guanine: step 1/1. It participates in purine metabolism; XMP biosynthesis via salvage pathway; XMP from xanthine: step 1/1. Purine salvage pathway enzyme that catalyzes the transfer of the ribosyl-5-phosphate group from 5-phospho-alpha-D-ribose 1-diphosphate (PRPP) to the N9 position of the 6-oxopurines guanine and xanthine to form the corresponding ribonucleotides GMP (guanosine 5'-monophosphate) and XMP (xanthosine 5'-monophosphate), with the release of PPi. To a lesser extent, also acts on hypoxanthine. The polypeptide is Xanthine-guanine phosphoribosyltransferase (Gluconobacter oxydans (strain 621H) (Gluconobacter suboxydans)).